The sequence spans 596 residues: Lamin-B2 (596 aa).

The segment at 1 to 20 (MASLPPHAGPATPLSPTRLS) is disordered. Positions 1-26 (MASLPPHAGPATPLSPTRLSRLQEKE) are head. Threonine 12 is modified (phosphothreonine). Serine 15 is modified (phosphoserine). The IF rod domain occupies 24 to 380 (EKEELRELND…KLLEGEEERL (357 aa)). The tract at residues 27 to 61 (ELRELNDRLAHYIDRVRALELENDRLLLRISEKEE) is coil 1A. N6-acetyllysine; alternate is present on lysine 59. Lysine 59 is covalently cross-linked (Glycyl lysine isopeptide (Lys-Gly) (interchain with G-Cter in SUMO2); alternate). A linker 1 region spans residues 62-73 (VTTREVSGIKTL). Residues 74 to 207 (YESELADARR…AFSKSVFEEE (134 aa)) form a coil 1B region. Glycyl lysine isopeptide (Lys-Gly) (interchain with G-Cter in SUMO2) cross-links involve residues lysine 173 and lysine 233. The interval 208–234 (VRETRRRHERRLVEVDSSRQQEYDFKM) is linker 2. A coil 2 region spans residues 235 to 378 (AQALEDLRSQ…YRKLLEGEEE (144 aa)). 2 positions are modified to phosphoserine: serine 294 and serine 385. Positions 376–440 (EEERLKLSPS…ASRVSSGSRL (65 aa)) are disordered. Residues 379-596 (RLKLSPSPSS…RTTSRGCRLM (218 aa)) form a tail region. Positions 382 to 403 (LSPSPSSRITISRATSSSSSSS) are enriched in low complexity. Threonine 391 is a glycosylation site (O-linked (GlcNAc) threonine). Phosphoserine occurs at positions 398, 400, and 402. Arginine 413 is modified (omega-N-methylarginine). The Nuclear localization signal signature appears at 415–420 (KRRRLE). Residues 425–439 (SGSPSRASRVSSGSR) are compositionally biased toward low complexity. Residues 438 to 559 (SRLAQQTVAT…VKAAKHSSVQ (122 aa)) enclose the LTD domain. Lysine 465 participates in a covalent cross-link: Glycyl lysine isopeptide (Lys-Gly) (interchain with G-Cter in SUMO2). Residue serine 473 is modified to Phosphoserine. The segment at 552–596 (AAKHSSVQGRENGEEEEEEEAEFGEEDLFHQQGDPRTTSRGCRLM) is disordered. Residues 564–577 (GEEEEEEEAEFGEE) show a composition bias toward acidic residues. The span at 585-596 (DPRTTSRGCRLM) shows a compositional bias: polar residues. Residue cysteine 593 is modified to Cysteine methyl ester. A lipid anchor (S-farnesyl cysteine) is attached at cysteine 593. A propeptide spans 594–596 (RLM) (removed in mature form).

It belongs to the intermediate filament family. In terms of assembly, dimer. Lamin dimers then assemble into dimeric head-to-tail polymers. Ultimately, two head-to-tail polymers assemble laterally into a protofilament with a uniformly shaped rod of 3.5 nm in diameter. Interacts with TMEM43. Post-translationally, B-type lamins undergo a series of modifications, such as farnesylation and phosphorylation. Increased phosphorylation of the lamins occurs before envelope disintegration and probably plays a role in regulating lamin associations. Phosphorylation plays a key role in lamin organization, subcellular localization and nuclear envelope disintegration. Phosphorylation by CDK1 at Ser-15 and Ser-385 at the onset of mitosis drives lamin disassembly and nuclear envelope breakdown. As to expression, germ cell-specific.

It is found in the nucleus lamina. Functionally, lamins are intermediate filament proteins that assemble into a filamentous meshwork, and which constitute the major components of the nuclear lamina, a fibrous layer on the nucleoplasmic side of the inner nuclear membrane. Lamins provide a framework for the nuclear envelope, bridging the nuclear envelope and chromatin, thereby playing an important role in nuclear assembly, chromatin organization, nuclear membrane and telomere dynamics. The structural integrity of the lamina is strictly controlled by the cell cycle, as seen by the disintegration and formation of the nuclear envelope in prophase and telophase, respectively. This Mus musculus (Mouse) protein is Lamin-B2 (Lmnb2).